The primary structure comprises 236 residues: Phosphatidylserine decarboxylase proenzyme (236 aa).

Residue S203 is the Schiff-base intermediate with substrate; via pyruvic acid of the active site. S203 is modified (pyruvic acid (Ser); by autocatalysis).

This sequence belongs to the phosphatidylserine decarboxylase family. PSD-A subfamily. In terms of assembly, heterodimer of a large membrane-associated beta subunit and a small pyruvoyl-containing alpha subunit. Pyruvate serves as cofactor. Is synthesized initially as an inactive proenzyme. Formation of the active enzyme involves a self-maturation process in which the active site pyruvoyl group is generated from an internal serine residue via an autocatalytic post-translational modification. Two non-identical subunits are generated from the proenzyme in this reaction, and the pyruvate is formed at the N-terminus of the alpha chain, which is derived from the carboxyl end of the proenzyme. The post-translation cleavage follows an unusual pathway, termed non-hydrolytic serinolysis, in which the side chain hydroxyl group of the serine supplies its oxygen atom to form the C-terminus of the beta chain, while the remainder of the serine residue undergoes an oxidative deamination to produce ammonia and the pyruvoyl prosthetic group on the alpha chain.

The protein localises to the cell membrane. It catalyses the reaction a 1,2-diacyl-sn-glycero-3-phospho-L-serine + H(+) = a 1,2-diacyl-sn-glycero-3-phosphoethanolamine + CO2. It functions in the pathway phospholipid metabolism; phosphatidylethanolamine biosynthesis; phosphatidylethanolamine from CDP-diacylglycerol: step 2/2. Catalyzes the formation of phosphatidylethanolamine (PtdEtn) from phosphatidylserine (PtdSer). The sequence is that of Phosphatidylserine decarboxylase proenzyme from Saccharopolyspora erythraea (strain ATCC 11635 / DSM 40517 / JCM 4748 / NBRC 13426 / NCIMB 8594 / NRRL 2338).